Consider the following 433-residue polypeptide: GTPase Der (433 aa).

EngA-type G domains follow at residues 3–167 (NIVA…QDTI) and 174–349 (PKIA…TNKT). GTP-binding positions include 9-16 (GRPNVGKS), 56-60 (DTGGY), 119-122 (NKAD), 180-187 (GRPNVGKS), 227-231 (DTAGI), and 292-295 (NKWD). The KH-like domain maps to 350 to 433 (QKISTAALNQ…VPVQLVFRKK (84 aa)).

It belongs to the TRAFAC class TrmE-Era-EngA-EngB-Septin-like GTPase superfamily. EngA (Der) GTPase family. Associates with the 50S ribosomal subunit.

Functionally, GTPase that plays an essential role in the late steps of ribosome biogenesis. The sequence is that of GTPase Der from Amoebophilus asiaticus (strain 5a2).